Consider the following 111-residue polypeptide: MMKGGMAGLMKQAQQMQEKMQKMQEELANAEVTGQSGGGLVSVVMTGRHDVKRVSIDQSLMSTDADDKEVLEDLIAAALNDAVRKIEQNSQDKMGSMTAGMQLPPGFKMPF.

2 disordered regions span residues 1–25 and 89–111; these read MMKG…KMQE and NSQD…KMPF.

Belongs to the YbaB/EbfC family. As to quaternary structure, homodimer.

The protein localises to the cytoplasm. The protein resides in the nucleoid. Functionally, binds to DNA and alters its conformation. May be involved in regulation of gene expression, nucleoid organization and DNA protection. The sequence is that of Nucleoid-associated protein PSEEN1789 from Pseudomonas entomophila (strain L48).